Consider the following 144-residue polypeptide: Ribosome maturation factor RimP (144 aa).

Belongs to the RimP family.

The protein resides in the cytoplasm. Required for maturation of 30S ribosomal subunits. The protein is Ribosome maturation factor RimP of Methylobacillus flagellatus (strain ATCC 51484 / DSM 6875 / VKM B-1610 / KT).